Reading from the N-terminus, the 106-residue chain is Insulin-2 (106 aa).

An N-terminal signal peptide occupies residues methionine 1 to alanine 23. 3 cysteine pairs are disulfide-bonded: cysteine 30–cysteine 92, cysteine 42–cysteine 105, and cysteine 91–cysteine 96. Positions aspartate 56–methionine 83 are cleaved as a propeptide — c peptide.

The protein belongs to the insulin family. In terms of assembly, heterodimer of a B chain and an A chain linked by two disulfide bonds.

Its subcellular location is the secreted. Insulin decreases blood glucose concentration. It increases cell permeability to monosaccharides, amino acids and fatty acids. It accelerates glycolysis, the pentose phosphate cycle, and glycogen synthesis in liver. The chain is Insulin-2 (ins-b) from Xenopus laevis (African clawed frog).